A 636-amino-acid chain; its full sequence is Probable Xaa-Pro aminopeptidase P (636 aa).

Mn(2+) is bound by residues Asp414, Asp425, Glu523, and Glu537.

Belongs to the peptidase M24B family. It depends on Mn(2+) as a cofactor.

The catalysed reaction is Release of any N-terminal amino acid, including proline, that is linked to proline, even from a dipeptide or tripeptide.. Its function is as follows. Catalyzes the removal of a penultimate prolyl residue from the N-termini of peptides. In Ajellomyces capsulatus (strain H143) (Darling's disease fungus), this protein is Probable Xaa-Pro aminopeptidase P (AMPP).